Reading from the N-terminus, the 26-residue chain is GIWGTALKWGVKLLPKLVGMAQTKKQ.

In terms of tissue distribution, expressed by the venom gland.

Its subcellular location is the secreted. The protein resides in the target cell membrane. In terms of biological role, has a broad spectrum of activity against both Gram-positive and Gram-negative bacteria and S.cerevisiae. Has insecticidal and hemolytic activities. May act by disrupting the integrity of the bacterial cell membrane. This Neoponera goeldii (Ponerine ant) protein is M-poneritoxin-Ng1d.